Consider the following 265-residue polypeptide: Hydroxyethylthiazole kinase 2 (265 aa).

Met39 is a substrate binding site. Positions 115 and 168 each coordinate ATP. Gly195 serves as a coordination point for substrate.

Belongs to the Thz kinase family. It depends on Mg(2+) as a cofactor.

The catalysed reaction is 5-(2-hydroxyethyl)-4-methylthiazole + ATP = 4-methyl-5-(2-phosphooxyethyl)-thiazole + ADP + H(+). It participates in cofactor biosynthesis; thiamine diphosphate biosynthesis; 4-methyl-5-(2-phosphoethyl)-thiazole from 5-(2-hydroxyethyl)-4-methylthiazole: step 1/1. In terms of biological role, catalyzes the phosphorylation of the hydroxyl group of 4-methyl-5-beta-hydroxyethylthiazole (THZ). This Clostridium botulinum (strain Kyoto / Type A2) protein is Hydroxyethylthiazole kinase 2.